A 108-amino-acid chain; its full sequence is Protein S100-A15A (108 aa).

The EF-hand domain maps to lysine 53 to aspartate 88. Ca(2+) contacts are provided by aspartate 66, asparagine 68, aspartate 70, glutamine 72, and glutamate 77.

Belongs to the S-100 family.

This chain is Protein S100-A15A (S100A15A), found in Gorilla gorilla gorilla (Western lowland gorilla).